We begin with the raw amino-acid sequence, 265 residues long: Capsule polysaccharide export inner-membrane protein BexB (265 aa).

6 helical membrane-spanning segments follow: residues 37–57, 64–84, 118–138, 151–171, 178–198, and 235–255; these read IGFF…VMMW, KFST…AMMW, LLEV…LVMI, LIAW…ICAI, FGKI…AFFF, and ESIG…LVMV. The region spanning 37–258 is the ABC transmembrane type-2 domain; sequence IGFFWLFVEP…LLGLVMVKNF (222 aa).

The protein belongs to the ABC-2 integral membrane protein family.

It is found in the cell inner membrane. Functionally, may form an ATP-driven capsule polysaccharide export apparatus, in association with the BexA, BexC and BexD proteins. The sequence is that of Capsule polysaccharide export inner-membrane protein BexB (bexB) from Haemophilus influenzae.